Consider the following 324-residue polypeptide: Quinolinate synthase (324 aa).

Iminosuccinate is bound by residues H39 and S56. C101 provides a ligand contact to [4Fe-4S] cluster. Iminosuccinate contacts are provided by residues 127-129 and S144; that span reads YIN. C187 contributes to the [4Fe-4S] cluster binding site. Residues 213–215 and T230 each bind iminosuccinate; that span reads HPE. [4Fe-4S] cluster is bound at residue C280.

This sequence belongs to the quinolinate synthase family. Type 2 subfamily. Requires [4Fe-4S] cluster as cofactor.

It localises to the cytoplasm. The enzyme catalyses iminosuccinate + dihydroxyacetone phosphate = quinolinate + phosphate + 2 H2O + H(+). The protein operates within cofactor biosynthesis; NAD(+) biosynthesis; quinolinate from iminoaspartate: step 1/1. Catalyzes the condensation of iminoaspartate with dihydroxyacetone phosphate to form quinolinate. The protein is Quinolinate synthase of Trichormus variabilis (strain ATCC 29413 / PCC 7937) (Anabaena variabilis).